A 452-amino-acid polypeptide reads, in one-letter code: Pre-mRNA-splicing factor prp46 (452 aa).

Low complexity predominate over residues 61–70 (AAKQAQAAAA). The disordered stretch occupies residues 61 to 129 (AAKQAQAAAA…SATRQQPPEW (69 aa)). Over residues 114–125 (SLIQRPSATRQQ) the composition is skewed to polar residues. WD repeat units follow at residues 141–180 (GHLG…LRLT), 183–222 (GHIS…VIRH), 225–264 (GHLS…NIHV), 267–308 (GHTG…GVLT), 310–349 (HKKG…QNFE), 350–388 (GHNA…RYQT), and 399–438 (EAEA…TPET). Residues 432–452 (DQATPETHPVTWAPTLGRQRY) form a disordered region.

This sequence belongs to the WD repeat PRL1/PRL2 family. Associated with the spliceosome.

The protein localises to the cytoplasm. The protein resides in the nucleus. Involved in pre-mRNA splicing and required for cell cycle progression at G2/M. The polypeptide is Pre-mRNA-splicing factor prp46 (prp46) (Emericella nidulans (strain FGSC A4 / ATCC 38163 / CBS 112.46 / NRRL 194 / M139) (Aspergillus nidulans)).